We begin with the raw amino-acid sequence, 634 residues long: Kinesin-like protein KIF22 (634 aa).

Residues 19 to 345 form the Kinesin motor domain; it reads RVRVAVRLRP…LNFAAKSKQI (327 aa). 103-110 contributes to the ATP binding site; it reads GPTGAGKT. The interval 357–406 is disordered; the sequence is APTIAPGKRTREEQEAGGSGEPQNKRSKEGKKAEHSPSPPLHPQSSPDSS. A compositionally biased stretch (basic and acidic residues) spans 379–391; sequence QNKRSKEGKKAEH. Positions 421–471 form a coiled coil; sequence SAERERLNLLKTVAQSRKEIQMLKEKQKELEDKANMFNKQKETTEKESKDA.

Belongs to the TRAFAC class myosin-kinesin ATPase superfamily. Kinesin family. Post-translationally, ubiquitinated, leading to its subsequent proteasomal degradation.

It localises to the nucleus. Its subcellular location is the cytoplasm. The protein resides in the cytoskeleton. Its function is as follows. Kinesin family member that is involved in spindle formation and the movements of chromosomes during mitosis and meiosis. Binds to microtubules and to DNA. In Danio rerio (Zebrafish), this protein is Kinesin-like protein KIF22 (kif22).